The chain runs to 791 residues: Putative DNA (cytosine-5)-methyltransferase CMT1 (791 aa).

Positions 37–59 are disordered; sequence YQSKKTKLQAPTKKPANKGGKKE. The BAH domain maps to 79-199; it reads VLINLNDDVY…VPYLNFTSAD (121 aa). An SAM-dependent MTase C5-type domain is found at 225-768; it reads KFLLDLYSGC…YAFGMASQGL (544 aa). A coiled-coil region spans residues 308–333; the sequence is VESISELEDEEVEENDDIDEASTGAE. Residues 339-404 form the Chromo domain; it reads FEVEKFLGIM…DGFKSHLLPL (66 aa). Cysteine 417 is a catalytic residue.

The protein belongs to the class I-like SAM-binding methyltransferase superfamily. C5-methyltransferase family. In terms of tissue distribution, expressed in flowers. Not detected in leaves, roots, seedlings and plants prior formation of flower buds.

The protein resides in the nucleus. The enzyme catalyses a 2'-deoxycytidine in DNA + S-adenosyl-L-methionine = a 5-methyl-2'-deoxycytidine in DNA + S-adenosyl-L-homocysteine + H(+). Functionally, may be involved in the CpXpG methylation and in gene silencing. The sequence is that of Putative DNA (cytosine-5)-methyltransferase CMT1 (CMT1) from Arabidopsis thaliana (Mouse-ear cress).